Consider the following 174-residue polypeptide: Disulfide bond formation protein B (174 aa).

Residues 1-14 lie on the Cytoplasmic side of the membrane; the sequence is MLHIFYIYSKSRKF. Residues 15-31 form a helical membrane-spanning segment; the sequence is WAILICSSISLISIALL. The Periplasmic segment spans residues 32 to 49; it reads NQFFFLLKPCILCIYQRC. C41 and C44 are oxidised to a cystine. A helical transmembrane segment spans residues 50-65; it reads SLFGITIAGLIALISP. Residues 66–72 lie on the Cytoplasmic side of the membrane; that stretch reads KTTLLRL. The helical transmembrane segment at 73 to 90 threads the bilayer; that stretch reads FSIFIWLYSAIKGLYFSN. Topologically, residues 91–146 are periplasmic; the sequence is IHMQTTLHPSSSLTCDLFVSFPNWLPLNKWYPIIFDSKISNCYSYPQYLLYLEISQ. Cysteines 105 and 132 form a disulfide. Residues 147 to 165 traverse the membrane as a helical segment; that stretch reads WMLLFFLIYLIIAIFTIIS. Residues 166 to 174 are Cytoplasmic-facing; it reads QCHNLFQKK.

It belongs to the DsbB family.

The protein resides in the cell inner membrane. Its function is as follows. Required for disulfide bond formation in some periplasmic proteins. Acts by oxidizing the DsbA protein. The chain is Disulfide bond formation protein B from Blochmanniella floridana.